A 1084-amino-acid polypeptide reads, in one-letter code: Siderophore biosynthesis regulatory protein URBS1 (1084 aa).

Disordered stretches follow at residues 1 to 164 (MALP…QSSS), 245 to 283 (AEEHAKMQRYSDEHPRAMNPTSRASYEHESRGMPYRDSY), and 300 to 337 (RPVHHADSSTNSPQYVPGDVYEHEGSGSPPAAHHAGMR). Residues 23-51 (QAAAASSSSSSSSSHHPPPRIAARPIAPA) show a composition bias toward low complexity. Composition is skewed to polar residues over residues 97 to 106 (SHHNASSTAT) and 128 to 141 (RSQSPIAAFRNRSQ). Over residues 150 to 164 (PSRSQPNSPLLQSSS) the composition is skewed to low complexity. Residues 245-260 (AEEHAKMQRYSDEHPR) are compositionally biased toward basic and acidic residues. The segment at 338-362 (CSNCGVTSTPLWRRAPDGSTICNAC) adopts a GATA-type 1 zinc-finger fold. Disordered regions lie at residues 372 to 405 (HRSASNRLSGSDASPPTHEAKLAAAGPSCSREDD) and 442 to 472 (VSKRESQTSEDPPPARTAERAPPVAEEKMDD). Residues 373–385 (RSASNRLSGSDAS) are compositionally biased toward polar residues. The GATA-type 2 zinc finger occupies 482 to 506 (CTNCQTTTTPLWRRDEDGNNICNAC). 6 disordered regions span residues 559–595 (IAPAAGRNAGDSTPKSTESRRASKKSSLTSEQAMREA), 643–679 (RAGADTARTSHPDDSRSSKRPRQSYPLAPREAYDERD), 692–803 (THAA…TKLS), 841–940 (EAAG…SRRN), 953–1019 (AAVP…DDHW), and 1040–1084 (ARPV…APRT). 2 stretches are compositionally biased toward basic and acidic residues: residues 650–659 (RTSHPDDSRS) and 715–725 (RLGRSELHGES). Basic residues predominate over residues 752–781 (PHHHHHHHHHHANHASHAVHHGHHHHHHHP). Residues 875 to 888 (RGTRSGHDSIKQEA) show a composition bias toward basic and acidic residues. A compositionally biased stretch (polar residues) spans 961–970 (SPPSTVSNPA). A compositionally biased stretch (low complexity) spans 1070–1084 (PVASSPSQAVSAPRT).

The protein localises to the nucleus. Involved in the regulation of secreted ferrichrome-type siderophores. Acts directly or indirectly to repress the biosynthesis of siderophores. This is Siderophore biosynthesis regulatory protein URBS1 (URBS1) from Mycosarcoma maydis (Corn smut fungus).